The following is an 81-amino-acid chain: Adipogenin (81 aa).

A helical membrane pass occupies residues 16–36 (FLVFWLCLPVALLLFLLIIWL).

The protein belongs to the adipogenin family. In terms of tissue distribution, highly expressed in subcutaneous, perirenal and mesecentric adipose tissue.

The protein resides in the membrane. The protein localises to the nucleus. Its function is as follows. Plays a role in stimulating adipocyte differentiation and development. The chain is Adipogenin from Bos taurus (Bovine).